A 458-amino-acid polypeptide reads, in one-letter code: Argininosuccinate lyase (458 aa).

It belongs to the lyase 1 family. Argininosuccinate lyase subfamily.

The protein resides in the cytoplasm. It catalyses the reaction 2-(N(omega)-L-arginino)succinate = fumarate + L-arginine. It participates in amino-acid biosynthesis; L-arginine biosynthesis; L-arginine from L-ornithine and carbamoyl phosphate: step 3/3. In Geotalea daltonii (strain DSM 22248 / JCM 15807 / FRC-32) (Geobacter daltonii), this protein is Argininosuccinate lyase.